We begin with the raw amino-acid sequence, 238 residues long: Protein CPn_0658/CP_0089/CPj0658/CpB0684 (238 aa).

It belongs to the chlamydial CPn_0658/CT_538/TC_0825 family.

This Chlamydia pneumoniae (Chlamydophila pneumoniae) protein is Protein CPn_0658/CP_0089/CPj0658/CpB0684.